We begin with the raw amino-acid sequence, 163 residues long: Lysosomal enzyme trafficking factor (163 aa).

A run of 2 helical transmembrane segments spans residues 40–60 and 98–118; these read MGWI…YYVF and LPFW…FLFL.

It belongs to the LYSET family. In terms of assembly, interacts with GNPTAB; this interaction is important for proper localization of GNPTAB in Golgi stacks. Interacts with MBTPS1.

It is found in the golgi apparatus membrane. Its function is as follows. Required for mannose-6-phosphate-dependent trafficking of lysosomal enzymes. LYSET bridges GlcNAc-1-phosphate transferase (GNPTAB), to the membrane-bound transcription factor site-1 protease (MBTPS1), thus allowing proteolytic activation of the GNPTAB. GNPTAB is involved in the regulation of M6P-dependent Golgi-to-lysosome trafficking of lysosomal enzymes. LYSET is thus an essential factor for maturation and delivery of lysosomal hydrolases. In Bos taurus (Bovine), this protein is Lysosomal enzyme trafficking factor (LYSET).